The sequence spans 564 residues: Diacylglycerol kinase epsilon (564 aa).

A helical membrane pass occupies residues 20-40 (LVLWTLCSVLLPVFITLWCSL). 2 Phorbol-ester/DAG-type zinc fingers span residues 57–106 (KHCW…RFPC) and 121–174 (PHHW…SEKC). Residues 212–353 (KQWTPLIILA…LDRWKVQVTN (142 aa)) enclose the DAGKc domain.

The protein belongs to the eukaryotic diacylglycerol kinase family. In terms of tissue distribution, highly expressed in brain and heart. In brain, highly expressed in Purkinje cells of the cerebellum, pyramidal cells of the hippocampus, mitral cells of the olfactory bulb, and neurons of the substantia nigra. Lower expression in neurons of the thalamus, superior olive, and lateral reticular nucleus is also detected. Expressed in platelets.

It is found in the membrane. The protein localises to the cytoplasm. The catalysed reaction is a 1,2-diacyl-sn-glycerol + ATP = a 1,2-diacyl-sn-glycero-3-phosphate + ADP + H(+). It catalyses the reaction 1-hexadecanoyl-2-(5Z,8Z,11Z,14Z-eicosatetraenoyl)-sn-glycerol + ATP = 1-hexadecanoyl-2-(5Z,8Z,11Z,14Z-eicosatetraenoyl)-sn-glycero-3-phosphate + ADP + H(+). The enzyme catalyses 1-octadecanoyl-2-(5Z,8Z,11Z,14Z-eicosatetraenoyl)-sn-glycerol + ATP = 1-octadecanoyl-2-(5Z,8Z,11Z,14Z-eicosatetraenoyl)-sn-glycero-3-phosphate + ADP + H(+). It carries out the reaction 1-eicosanoyl-2-(5Z,8Z,11Z,14Z)-eicosatetraenoyl-sn-glycerol + ATP = 1-eicosanoyl-2-(5Z,8Z,11Z,14Z)-eicosatetraenoyl-sn-glycero-3-phosphate + ADP + H(+). The catalysed reaction is 1,2-di-(5Z,8Z,11Z,14Z)-eicosatetraenoyl-sn-glycerol + ATP = 1,2-di-(5Z,8Z,11Z,14Z)-eicosatetraenoyl-sn-glycero-3-phosphate + ADP + H(+). It catalyses the reaction 1-octadecanoyl-2-(9Z,12Z)-octadecadienoyl-sn-glycerol + ATP = 1-octadecanoyl-2-(9Z,12Z-octadecadienoyl)-sn-glycero-3-phosphate + ADP + H(+). The enzyme catalyses 1,2-di-(9Z,12Z-octadecadienoyl)-sn-glycerol + ATP = 1,2-di-(9Z,12Z-octadecadienoyl)-sn-glycero-3-phosphate + ADP + H(+). It carries out the reaction 1,2-di-(9Z-octadecenoyl)-sn-glycerol + ATP = 1,2-di-(9Z-octadecenoyl)-sn-glycero-3-phosphate + ADP + H(+). Its pathway is lipid metabolism; glycerolipid metabolism. Functionally, membrane-bound diacylglycerol kinase that converts diacylglycerol/DAG into phosphatidic acid/phosphatidate/PA and regulates the respective levels of these two bioactive lipids. Thereby, acts as a central switch between the signaling pathways activated by these second messengers with different cellular targets and opposite effects in numerous biological processes. Also plays an important role in the biosynthesis of complex lipids. Displays specificity for diacylglycerol substrates with an arachidonoyl acyl chain at the sn-2 position, with the highest activity toward 1-octadecanoyl-2-(5Z,8Z,11Z,14Z-eicosatetraenoyl)-sn-glycerol the main diacylglycerol intermediate within the phosphatidylinositol turnover cycle. Can also phosphorylate diacylglycerol substrates with a linoleoyl acyl chain at the sn-2 position but much less efficiently. This is Diacylglycerol kinase epsilon (Dgke) from Mus musculus (Mouse).